The sequence spans 258 residues: Tryptophan synthase alpha chain (258 aa).

Residues Glu47 and Asp58 each act as proton acceptor in the active site.

The protein belongs to the TrpA family. Tetramer of two alpha and two beta chains.

The catalysed reaction is (1S,2R)-1-C-(indol-3-yl)glycerol 3-phosphate + L-serine = D-glyceraldehyde 3-phosphate + L-tryptophan + H2O. Its pathway is amino-acid biosynthesis; L-tryptophan biosynthesis; L-tryptophan from chorismate: step 5/5. In terms of biological role, the alpha subunit is responsible for the aldol cleavage of indoleglycerol phosphate to indole and glyceraldehyde 3-phosphate. In Bacillus cereus (strain ZK / E33L), this protein is Tryptophan synthase alpha chain.